The primary structure comprises 29 residues: Ceratotoxin-B (29 aa).

Homomer of four to six subunits.

It is found in the secreted. Functionally, female-specific peptides with potent activity against Gram-positive and Gram-negative bacteria. They have as well hemolytic activity. The sequence is that of Ceratotoxin-B (CTXB) from Ceratitis capitata (Mediterranean fruit fly).